The primary structure comprises 297 residues: Elongation factor Ts (297 aa).

The involved in Mg(2+) ion dislocation from EF-Tu stretch occupies residues 82-85 (TDFV).

The protein belongs to the EF-Ts family.

Its subcellular location is the cytoplasm. Functionally, associates with the EF-Tu.GDP complex and induces the exchange of GDP to GTP. It remains bound to the aminoacyl-tRNA.EF-Tu.GTP complex up to the GTP hydrolysis stage on the ribosome. The chain is Elongation factor Ts from Azoarcus sp. (strain BH72).